A 354-amino-acid chain; its full sequence is Rhodopsin (354 aa).

At 1 to 36 (MNGTEGPDFYVPMVNTTGIVRSPYDYPQYYLVNPAA) the chain is on the extracellular side. 2 N-linked (GlcNAc...) asparagine glycosylation sites follow: Asn-2 and Asn-15. The helical transmembrane segment at 37 to 61 (FSMLAAYMFFLILVGFPVNFLTLYV) threads the bilayer. The Cytoplasmic portion of the chain corresponds to 62 to 73 (TMEHKKLRTPLN). The chain crosses the membrane as a helical span at residues 74 to 96 (YILLNLAVANLFMVIGGFTTTMY). Residues 97–110 (TSMHGYFVLGRTGC) lie on the Extracellular side of the membrane. Cys-110 and Cys-187 are disulfide-bonded. The chain crosses the membrane as a helical span at residues 111-133 (NLEGFFATLGGEIALWSLVVLAV). The 'Ionic lock' involved in activated form stabilization motif lies at 134 to 136 (ERW). At 134–152 (ERWVVVCKPISNFRFGENH) the chain is on the cytoplasmic side. The chain crosses the membrane as a helical span at residues 153–173 (AVMGVSFTWLMACACSVPPLF). Topologically, residues 174–202 (GWSRYIPEGMQCSCGIDYYTRAPGYNNES) are extracellular. A helical membrane pass occupies residues 203–224 (FVIYMFVCHFSIPLTIIFFCYG). Topologically, residues 225-252 (RLLCAVKDAAAAQQESETTQRAEREVSR) are cytoplasmic. A helical transmembrane segment spans residues 253-274 (MVVIMVIGFLICWLPYASVAWF). The Extracellular portion of the chain corresponds to 275–286 (IFTHQGSEFGPV). A helical transmembrane segment spans residues 287 to 308 (FMTIPAFFAKSSAIYNPMIYIC). Position 296 is an N6-(retinylidene)lysine (Lys-296). The Cytoplasmic portion of the chain corresponds to 309–354 (MNKQFRHCMITTLCCGKNPFEEEEGASTTASKTEASSVSSSHVSPA). 2 S-palmitoyl cysteine lipidation sites follow: Cys-322 and Cys-323. Residues 333–354 (GASTTASKTEASSVSSSHVSPA) are disordered. Residues 334-354 (ASTTASKTEASSVSSSHVSPA) are compositionally biased toward low complexity.

Belongs to the G-protein coupled receptor 1 family. Opsin subfamily. Post-translationally, phosphorylated on some or all of the serine and threonine residues present in the C-terminal region. In terms of processing, contains one covalently linked retinal chromophore.

The protein localises to the membrane. Its subcellular location is the cell projection. It is found in the cilium. It localises to the photoreceptor outer segment. In terms of biological role, photoreceptor required for image-forming vision at low light intensity. While most salt water fish species use retinal as chromophore, most freshwater fish use 3-dehydroretinal, or a mixture of retinal and 3-dehydroretinal. Light-induced isomerization of 11-cis to all-trans retinal triggers a conformational change that activates signaling via G-proteins. Subsequent receptor phosphorylation mediates displacement of the bound G-protein alpha subunit by arrestin and terminates signaling. The protein is Rhodopsin (rho) of Zeus faber (John Dory).